Reading from the N-terminus, the 431-residue chain is Hydroxylamine reductase (431 aa).

[4Fe-4S] cluster is bound by residues Cys-5, Cys-8, Cys-17, and Cys-23. Residues His-131, Glu-155, Cys-199, Cys-286, Cys-314, Cys-339, Glu-373, and Lys-375 each contribute to the hybrid [4Fe-2O-2S] cluster site. Residue Cys-286 is modified to Cysteine persulfide.

It belongs to the HCP family. The cofactor is [4Fe-4S] cluster. Requires hybrid [4Fe-2O-2S] cluster as cofactor.

It is found in the cytoplasm. The catalysed reaction is A + NH4(+) + H2O = hydroxylamine + AH2 + H(+). In terms of biological role, catalyzes the reduction of hydroxylamine to form NH(3) and H(2)O. The polypeptide is Hydroxylamine reductase (Thermotoga petrophila (strain ATCC BAA-488 / DSM 13995 / JCM 10881 / RKU-1)).